A 295-amino-acid chain; its full sequence is 4-hydroxy-tetrahydrodipicolinate synthase (295 aa).

Residue T46 participates in pyruvate binding. Y134 (proton donor/acceptor) is an active-site residue. K162 (schiff-base intermediate with substrate) is an active-site residue. I205 provides a ligand contact to pyruvate.

The protein belongs to the DapA family. As to quaternary structure, homotetramer; dimer of dimers.

It is found in the cytoplasm. It carries out the reaction L-aspartate 4-semialdehyde + pyruvate = (2S,4S)-4-hydroxy-2,3,4,5-tetrahydrodipicolinate + H2O + H(+). It participates in amino-acid biosynthesis; L-lysine biosynthesis via DAP pathway; (S)-tetrahydrodipicolinate from L-aspartate: step 3/4. Functionally, catalyzes the condensation of (S)-aspartate-beta-semialdehyde [(S)-ASA] and pyruvate to 4-hydroxy-tetrahydrodipicolinate (HTPA). This Anaeromyxobacter dehalogenans (strain 2CP-C) protein is 4-hydroxy-tetrahydrodipicolinate synthase.